The following is a 529-amino-acid chain: Bifunctional purine biosynthesis protein PurH (529 aa).

Positions 1 to 148 constitute an MGS-like domain; sequence MQQRRPVRRA…KNHKDVAIVV (148 aa). Lys287 is modified (N6-acetyllysine).

The protein belongs to the PurH family.

It catalyses the reaction (6R)-10-formyltetrahydrofolate + 5-amino-1-(5-phospho-beta-D-ribosyl)imidazole-4-carboxamide = 5-formamido-1-(5-phospho-D-ribosyl)imidazole-4-carboxamide + (6S)-5,6,7,8-tetrahydrofolate. The catalysed reaction is IMP + H2O = 5-formamido-1-(5-phospho-D-ribosyl)imidazole-4-carboxamide. It participates in purine metabolism; IMP biosynthesis via de novo pathway; 5-formamido-1-(5-phospho-D-ribosyl)imidazole-4-carboxamide from 5-amino-1-(5-phospho-D-ribosyl)imidazole-4-carboxamide (10-formyl THF route): step 1/1. Its pathway is purine metabolism; IMP biosynthesis via de novo pathway; IMP from 5-formamido-1-(5-phospho-D-ribosyl)imidazole-4-carboxamide: step 1/1. This is Bifunctional purine biosynthesis protein PurH from Escherichia coli O7:K1 (strain IAI39 / ExPEC).